The following is a 110-amino-acid chain: Minor capsid protein VP2 (110 aa).

The protein belongs to the vesivirus VP2 protein family. As to quaternary structure, homooligomer. The portal-like structure consists in 12 copies of VP2. Interacts with capsid protein VP1.

The protein localises to the virion. The protein resides in the host cytoplasm. Functionally, minor structural protein that forms a portal-like structure at a unique three-fold axis of symmetry, following binding to the host receptor. The channel formed by VP2 may allow the delivery of the viral genome through the host endosomal membrane. The polypeptide is Minor capsid protein VP2 (Otariidae (fur seals &amp; sea lions)).